The chain runs to 747 residues: Sushi domain-containing protein 1 (747 aa).

A signal peptide spans 1–29 (MGRGPWDAGPSRRLLPLLLLLGLARGAAG). Residues 30-721 (APGPDGLDVC…WAQVKDSSLM (692 aa)) lie on the Extracellular side of the membrane. The 38-residue stretch at 35 to 72 (GLDVCATCHEHATCQQREGKKICICNYGFVGNGRTQCV) folds into the EGF-like 1 domain. 5 cysteine pairs are disulfide-bonded: C39–C48, C42–C57, C59–C71, C77–C91, and C85–C100. An EGF-like 2; calcium-binding domain is found at 73 to 112 (DKNECQFGATLVCGNHTSCHNTPGGFYCICLEGYRATNNN). 2 N-linked (GlcNAc...) asparagine glycosylation sites follow: N87 and N112. Residues 125 to 162 (DIDECEVSGLCRHGGRCVNTHGSFECYCMDGYLPRNGP) enclose the EGF-like 3; calcium-binding domain. 6 disulfides stabilise this stretch: C129–C141, C135–C150, C179–C221, C206–C234, C239–C281, and C266–C294. 2 consecutive Sushi domains span residues 177-236 (IDCG…HCQE) and 237-296 (INCG…TCTE). N193 carries N-linked (GlcNAc...) asparagine glycosylation. N253 is a glycosylation site (N-linked (GlcNAc...) asparagine). N-linked (GlcNAc...) asparagine glycans are attached at residues N348, N367, and N563. Residues 722-742 (LLQMAGVGLGSLAVVIILTFL) form a helical membrane-spanning segment. Topologically, residues 743-747 (SFSAV) are cytoplasmic.

It is found in the membrane. The protein is Sushi domain-containing protein 1 (SUSD1) of Homo sapiens (Human).